The chain runs to 449 residues: NADP-specific glutamate dehydrogenase (449 aa).

Lysine 125 is a catalytic residue.

The protein belongs to the Glu/Leu/Phe/Val dehydrogenases family. In terms of assembly, homohexamer.

The enzyme catalyses L-glutamate + NADP(+) + H2O = 2-oxoglutarate + NH4(+) + NADPH + H(+). This Giardia intestinalis (Giardia lamblia) protein is NADP-specific glutamate dehydrogenase.